We begin with the raw amino-acid sequence, 421 residues long: MIIILKGGRVIDPRNRRDEDADIWMEDGQIIAPQETVPEDAKIYDLAGKWVVPGLIDMHVHLRDPGEEYKESIVTGTDAAAAGGFTAVACMPNTDPVNDTGSVTRYILEKSEGAAARVYPVGALSEGLKGESLAEYADMKHAGAVALTDDGNPVVSSQLMRRAMEYAKSHDMLVISHSEEPTLSKRGCMNEGLVATRLGLKGIPAVAESIMVQREIALAGLTGARLHIAHVSCIESLAAIRDAKKRGLPVTAETAPHYFSLTDDAVIGYDTHAKMNPPLRTEEHRQAIRQALADGTLDVIATDHAPHSIVEKEVTFEYAANGIVGLETSLGLSLALVRDGVLTPSRLVELMSSVPAQILSVAGGELGVGAIADVTVIDPELEHTFLIAEGRSRGANSPFDGWKLKGAATLTFVAGEESYCR.

Histidine 59 and histidine 61 together coordinate Zn(2+). Residues 61–63 (HLR) and asparagine 93 each bind substrate. Zn(2+)-binding residues include aspartate 150, histidine 177, and histidine 230. Asparagine 276 lines the substrate pocket. Aspartate 303 is a Zn(2+) binding site. Residue aspartate 303 is part of the active site. Residue histidine 307 participates in substrate binding.

The protein belongs to the metallo-dependent hydrolases superfamily. DHOase family. Class I DHOase subfamily. Zn(2+) serves as cofactor.

It catalyses the reaction (S)-dihydroorotate + H2O = N-carbamoyl-L-aspartate + H(+). It functions in the pathway pyrimidine metabolism; UMP biosynthesis via de novo pathway; (S)-dihydroorotate from bicarbonate: step 3/3. Functionally, catalyzes the reversible cyclization of carbamoyl aspartate to dihydroorotate. The chain is Dihydroorotase from Desulfotalea psychrophila (strain LSv54 / DSM 12343).